We begin with the raw amino-acid sequence, 476 residues long: ATP synthase subunit beta (476 aa).

An ATP-binding site is contributed by glycine 162–threonine 169.

Belongs to the ATPase alpha/beta chains family. F-type ATPases have 2 components, CF(1) - the catalytic core - and CF(0) - the membrane proton channel. CF(1) has five subunits: alpha(3), beta(3), gamma(1), delta(1), epsilon(1). CF(0) has three main subunits: a(1), b(2) and c(9-12). The alpha and beta chains form an alternating ring which encloses part of the gamma chain. CF(1) is attached to CF(0) by a central stalk formed by the gamma and epsilon chains, while a peripheral stalk is formed by the delta and b chains.

It localises to the cell membrane. It catalyses the reaction ATP + H2O + 4 H(+)(in) = ADP + phosphate + 5 H(+)(out). Functionally, produces ATP from ADP in the presence of a proton gradient across the membrane. The catalytic sites are hosted primarily by the beta subunits. In Mycoplasma capricolum subsp. capricolum (strain California kid / ATCC 27343 / NCTC 10154), this protein is ATP synthase subunit beta.